The sequence spans 317 residues: DNA-directed RNA polymerase subunit alpha 2 (317 aa).

Positions 1–227 (MALENLLHPT…NQLRNIVDIE (227 aa)) are alpha N-terminal domain (alpha-NTD). The segment at 241–317 (INPILLKHVE…TLIENWPQDL (77 aa)) is alpha C-terminal domain (alpha-CTD).

It belongs to the RNA polymerase alpha chain family. Homodimer. The RNAP catalytic core consists of 2 alpha, 1 beta, 1 beta' and 1 omega subunit. When a sigma factor is associated with the core the holoenzyme is formed, which can initiate transcription.

It carries out the reaction RNA(n) + a ribonucleoside 5'-triphosphate = RNA(n+1) + diphosphate. In terms of biological role, DNA-dependent RNA polymerase catalyzes the transcription of DNA into RNA using the four ribonucleoside triphosphates as substrates. This Francisella tularensis subsp. holarctica (strain FTNF002-00 / FTA) protein is DNA-directed RNA polymerase subunit alpha 2.